The following is a 1088-amino-acid chain: RNA-directed RNA polymerase (1088 aa).

The region spanning 501–687 (LSYGDVTRFL…AKRYIAGGKI (187 aa)) is the RdRp catalytic domain.

The protein belongs to the reoviridae RNA-directed RNA polymerase family. Interacts with VP3 (Potential). Interacts with VP2; this interaction activates VP1. Interacts with NSP5; this interaction is probably necessary for the formation of functional virus factories. Interacts with NSP2; this interaction is weak. Mg(2+) serves as cofactor.

The protein localises to the virion. It carries out the reaction RNA(n) + a ribonucleoside 5'-triphosphate = RNA(n+1) + diphosphate. Its function is as follows. RNA-directed RNA polymerase that is involved in both transcription and genome replication. Together with VP3 capping enzyme, forms an enzyme complex positioned near the channels situated at each of the five-fold vertices of the core. Following infection, the outermost layer of the virus is lost, leaving a double-layered particle (DLP) made up of the core and VP6 shell. VP1 then catalyzes the transcription of fully conservative plus-strand genomic RNAs that are extruded through the DLP's channels into the cytoplasm where they function as mRNAs for translation of viral proteins. One copy of each of the viral (+)RNAs is also recruited during core assembly, together with newly synthesized polymerase complexes and VP2. The polymerase of these novo-formed particles catalyzes the synthesis of complementary minus-strands leading to dsRNA formation. To do so, the polymerase specifically recognizes and binds 4 bases 5'-UGUG-3' in the conserved 3'-sequence of plus-strand RNA templates. VP2 presumably activates the autoinhibited VP1-RNA complex to coordinate packaging and genome replication. Once dsRNA synthesis is complete, the polymerase switches to the transcriptional mode, thus providing secondary transcription. The polypeptide is RNA-directed RNA polymerase (Bos taurus (Bovine)).